The primary structure comprises 743 residues: MLSRLGALLQEAVGAREPSIDLLQAFVEHWKGITHYYIESTDESTPAKKTDIPWRLKQMLDILVYEEQQQAAAGEAGPCLEYLLQHKILETLCTLGKAEYPPGMRQQVFQFFSKVLAQVQHPLLHYLSVHRPVQKLLRLGGTASGSVTEKEEVQFTTVLCSKIQQDPELLAYILEGKKIVGRKKACGEPTALPKDTTSHGDKDCSHDGAPARPQLDGESCGAQALNSHMPAETEELDGGTTESNLITSLLGLCQSKKSRVALKAQENLLLLVSMASPAAATYLVQSSACCPAIVRHLCQLYRSMPVFLDPADIATLEGISWRLPSAPSDEASFPGKEALAAFLGWFDYCDHLITEAHTVVADALAKAVAENFFVETLQPQLLHVSEQSILTSTALLTAMLRQLRSPALLREAVAFLLGTDRQPEAPGDNPHTLYAHLIGHCDHLSDEISITTLRLFEELLQKPHEGIIHSLVLRNLEGRPYVAWGSPEPESYEDTLDLEEDPYFTDSFLDSGFQTPAKPRLAPATSYDGKTAVTEIVNSFLCLVPEEAKTSAFLEETGYDTYVHDAYGLFQECSSRVASWGWPLTPTPLDPHEPERPFFEGHFLRVLFDRMSRILDQPYSLNLQVTSVLSRLALFPHPHIHEYLLDPYISLAPGCRSLFSVLVRVIGDLMQRIQRVPQFPGKLLLVRKQLTGQAPGEQLDHQTLLQGVVVLEEFCKELAAIAFVKFPPHDPRQNVSPAPEGQV.

Residues 186–219 (CGEPTALPKDTTSHGDKDCSHDGAPARPQLDGES) are disordered. Positions 196–206 (TTSHGDKDCSH) are enriched in basic and acidic residues.

Belongs to the FHIP family. Expressed in liver.

Its function is as follows. Able to activate MAPK/ERK and TGFB signaling pathways. May regulate the activity of genes involved in intestinal barrier function and immunoprotective inflammation. May play a role in cell proliferation. This is FHF complex subunit HOOK-interacting protein 2B from Homo sapiens (Human).